A 742-amino-acid polypeptide reads, in one-letter code: Ferric enterobactin receptor PirA (742 aa).

Positions 1 to 28 are cleaved as a signal peptide; sequence MYPQFRRGHLAAAVLFASSSLLGGQALA. A TBDR plug domain is found at 57 to 184; sequence QELKQAPGVS…AGGVVNIITK (128 aa). Disordered regions lie at residues 91-112 and 409-435; these read GVNLTGNSSSGQRGNNRQIDIR and SSLKQGFVGSDSLPGTPAAGSRSPKSK. Over residues 94–108 the composition is skewed to polar residues; that stretch reads LTGNSSSGQRGNNRQ. Residues 189-742 enclose the TBDR beta-barrel domain; the sequence is RLRGSMTVFT…AYYVSMTTSF (554 aa). Cysteine 516 and cysteine 525 are oxidised to a cystine. The short motif at 725 to 742 is the TonB C-terminal box element; the sequence is ATYNEPGRAYYVSMTTSF.

Belongs to the TonB-dependent receptor family.

Its subcellular location is the cell outer membrane. Functionally, specific receptor for the siderophore ferric enterobactin. Probably involved in the transport of siderophores, including host catecholamines such as L-DOPA. In Pseudomonas aeruginosa (strain ATCC 15692 / DSM 22644 / CIP 104116 / JCM 14847 / LMG 12228 / 1C / PRS 101 / PAO1), this protein is Ferric enterobactin receptor PirA.